A 545-amino-acid chain; its full sequence is Chaperonin GroEL (545 aa).

ATP contacts are provided by residues 30-33, Lys-51, 87-91, Gly-415, and Asp-495; these read TLGP and DGTTT.

This sequence belongs to the chaperonin (HSP60) family. Forms a cylinder of 14 subunits composed of two heptameric rings stacked back-to-back. Interacts with the co-chaperonin GroES.

The protein localises to the cytoplasm. The enzyme catalyses ATP + H2O + a folded polypeptide = ADP + phosphate + an unfolded polypeptide.. Its function is as follows. Together with its co-chaperonin GroES, plays an essential role in assisting protein folding. The GroEL-GroES system forms a nano-cage that allows encapsulation of the non-native substrate proteins and provides a physical environment optimized to promote and accelerate protein folding. The protein is Chaperonin GroEL of Shewanella sp. (strain MR-7).